Here is a 450-residue protein sequence, read N- to C-terminus: 23S rRNA (uracil(1939)-C(5))-methyltransferase RlmD (450 aa).

The 59-residue stretch at 12–70 (SKQLSAKLSLSVNQLDHLGAGIAQHQGKVVFIPGALPDETVTVQFTEQKKNYARAKLIK) folds into the TRAM domain. [4Fe-4S] cluster is bound by residues Cys-83, Cys-89, Cys-92, and Cys-171. Residues Gln-283, Phe-312, Asn-317, Glu-333, Asp-360, and Asp-380 each contribute to the S-adenosyl-L-methionine site. Catalysis depends on Cys-406, which acts as the Nucleophile.

It belongs to the class I-like SAM-binding methyltransferase superfamily. RNA M5U methyltransferase family. RlmD subfamily.

It carries out the reaction uridine(1939) in 23S rRNA + S-adenosyl-L-methionine = 5-methyluridine(1939) in 23S rRNA + S-adenosyl-L-homocysteine + H(+). Catalyzes the formation of 5-methyl-uridine at position 1939 (m5U1939) in 23S rRNA. The chain is 23S rRNA (uracil(1939)-C(5))-methyltransferase RlmD from Shewanella baltica (strain OS155 / ATCC BAA-1091).